A 348-amino-acid chain; its full sequence is Holliday junction branch migration complex subunit RuvB (348 aa).

The interval 4 to 184 (ADRLIAASGR…FGIVQRLEFY (181 aa)) is large ATPase domain (RuvB-L). Residues isoleucine 23, arginine 24, glycine 65, lysine 68, threonine 69, threonine 70, 131–133 (EDF), arginine 174, tyrosine 184, and arginine 221 each bind ATP. Mg(2+) is bound at residue threonine 69. The segment at 185 to 255 (NDKDLSTIVS…VADMALNLLD (71 aa)) is small ATPAse domain (RuvB-S). Residues 258–348 (ERGFDHSDRR…GGDFSGPGDE (91 aa)) form a head domain (RuvB-H) region. Residues arginine 294, arginine 313, and arginine 318 each contribute to the DNA site.

Belongs to the RuvB family. In terms of assembly, homohexamer. Forms an RuvA(8)-RuvB(12)-Holliday junction (HJ) complex. HJ DNA is sandwiched between 2 RuvA tetramers; dsDNA enters through RuvA and exits via RuvB. An RuvB hexamer assembles on each DNA strand where it exits the tetramer. Each RuvB hexamer is contacted by two RuvA subunits (via domain III) on 2 adjacent RuvB subunits; this complex drives branch migration. In the full resolvosome a probable DNA-RuvA(4)-RuvB(12)-RuvC(2) complex forms which resolves the HJ.

The protein resides in the cytoplasm. The catalysed reaction is ATP + H2O = ADP + phosphate + H(+). In terms of biological role, the RuvA-RuvB-RuvC complex processes Holliday junction (HJ) DNA during genetic recombination and DNA repair, while the RuvA-RuvB complex plays an important role in the rescue of blocked DNA replication forks via replication fork reversal (RFR). RuvA specifically binds to HJ cruciform DNA, conferring on it an open structure. The RuvB hexamer acts as an ATP-dependent pump, pulling dsDNA into and through the RuvAB complex. RuvB forms 2 homohexamers on either side of HJ DNA bound by 1 or 2 RuvA tetramers; 4 subunits per hexamer contact DNA at a time. Coordinated motions by a converter formed by DNA-disengaged RuvB subunits stimulates ATP hydrolysis and nucleotide exchange. Immobilization of the converter enables RuvB to convert the ATP-contained energy into a lever motion, pulling 2 nucleotides of DNA out of the RuvA tetramer per ATP hydrolyzed, thus driving DNA branch migration. The RuvB motors rotate together with the DNA substrate, which together with the progressing nucleotide cycle form the mechanistic basis for DNA recombination by continuous HJ branch migration. Branch migration allows RuvC to scan DNA until it finds its consensus sequence, where it cleaves and resolves cruciform DNA. This Pseudomonas putida (strain ATCC 700007 / DSM 6899 / JCM 31910 / BCRC 17059 / LMG 24140 / F1) protein is Holliday junction branch migration complex subunit RuvB.